The primary structure comprises 701 residues: MARKTPIKRYRNIGICAHVDAGKTTTTERILYYTGRSHKMGETHDGASTTDWMEQEQERGITITSAAVTTFWQGMDKQYPEHRINIIDTPGHVDFTIEVERSLRVLDGAVVVFCGSSGVEPQSETVWRQANKYEVPRMVFVNKMDRAGANFMRVVEQIRNRLGATTVPIQLPIGAEDDFEGIVDLLRMKAIYWNEADQGMTYELRDIPESMKAEAEKAREQMIEAAAEANEEYMDKYLEGEELTYEEIKKGLRDRTIANEIVLATCGSAFKNKGVQAVLDAVIEFLPAPDEVKAIRGEVDDEGTEETRPVDDDAPFAALAFKIATDPFVGTLTFFRVYSGKLESGNAVFNSVKGKKERVGRMVQMHANDREEIKEVLAGDIAAAIGLKNVTTGDTLCDENNKIVLERMEFPEPVISVAVEPKSKADQEKMGVALGKLAQEDPSFRVRTDEESGQTIISGMGELHLDIIVDRMRREFKVEANIGKPQVAYRECIRKPVDVEGKFVRQSGGRGQYGHVKVKLEPLPLDDEDGENFIFVNEIVGGVVPKEYIPAVQQGIEEQMQNGCLAGYPLLGIKATLYDGSYHDVDSNEMAFKIAGSMAMKKGALEANPALLEPIMKVEVVTPEDYMGDVVGDLNRRRGLVQGMDEGPAGKVIRAEVPLSEMFGYATDLRSATQGRASYAMEFSRYMEAPSNIAEAIIKKG.

The region spanning 8-290 is the tr-type G domain; sequence KRYRNIGICA…AVIEFLPAPD (283 aa). GTP-binding positions include 17–24, 88–92, and 142–145; these read AHVDAGKT, DTPGH, and NKMD.

This sequence belongs to the TRAFAC class translation factor GTPase superfamily. Classic translation factor GTPase family. EF-G/EF-2 subfamily.

Its subcellular location is the cytoplasm. Its function is as follows. Catalyzes the GTP-dependent ribosomal translocation step during translation elongation. During this step, the ribosome changes from the pre-translocational (PRE) to the post-translocational (POST) state as the newly formed A-site-bound peptidyl-tRNA and P-site-bound deacylated tRNA move to the P and E sites, respectively. Catalyzes the coordinated movement of the two tRNA molecules, the mRNA and conformational changes in the ribosome. This Marinobacter nauticus (strain ATCC 700491 / DSM 11845 / VT8) (Marinobacter aquaeolei) protein is Elongation factor G.